Consider the following 477-residue polypeptide: Probable cytosolic Fe-S cluster assembly factor CG17683 (477 aa).

The [4Fe-4S] cluster site is built by C23, C68, C71, C74, C187, C243, C395, and C399.

Belongs to the NARF family.

Component of the cytosolic iron-sulfur (Fe/S) protein assembly machinery. Required for maturation of extramitochondrial Fe/S proteins. This is Probable cytosolic Fe-S cluster assembly factor CG17683 from Drosophila melanogaster (Fruit fly).